We begin with the raw amino-acid sequence, 737 residues long: DNA mismatch repair protein MLH1 (737 aa).

Disordered regions lie at residues 1-21 (MIDD…ATTI) and 378-416 (TLTS…PAGR). Residues 378–400 (TLTSQKSDSPVSQKPSGQKTQKV) are compositionally biased toward polar residues.

Belongs to the DNA mismatch repair MutL/HexB family. In terms of assembly, heterodimer of MLH1 and PMS1, called MutLalpha, which is the major MMR MutL activity correcting base-base mismatches as well as IDLs. The heterodimer binds double strand DNA independently of a mismatch with positive cooperativity and has more than one DNA binding site. Heterodimer of MLH1 and MLH3, called MutLbeta, which is involved in correction of a specific subset of IDLs when associated with MutSbeta. As to expression, ubiquitous.

Its subcellular location is the nucleus. In terms of biological role, involved in DNA mismatch repair (MMR), correcting insertion-deletion loops (IDLs) resulting from DNA replication, DNA damage or from recombination events between non-identical sequences during meiosis. Component of the MutLbeta heterodimer, which probably forms a ternary complex with the MutSbeta heterodimer that initially recognizes the DNA mismatches. This complex is thought to be responsible for directing the downstream MMR events, including strand discrimination, excision, and resynthesis. Plays a major role in promoting meiotic crossing-over and is involved in maintaining the genetic stability of simple sequence repeats by correction of frameshift intermediates. This Arabidopsis thaliana (Mouse-ear cress) protein is DNA mismatch repair protein MLH1 (MLH1).